The primary structure comprises 316 residues: Biotin synthase (316 aa).

The region spanning 36-260 (NKIQISMLLN…LMPKSYIRLA (225 aa)) is the Radical SAM core domain. [4Fe-4S] cluster-binding residues include C51, C55, and C58. [2Fe-2S] cluster is bound by residues C95, C126, C186, and R258.

It belongs to the radical SAM superfamily. Biotin synthase family. As to quaternary structure, homodimer. [4Fe-4S] cluster serves as cofactor. It depends on [2Fe-2S] cluster as a cofactor.

The enzyme catalyses (4R,5S)-dethiobiotin + (sulfur carrier)-SH + 2 reduced [2Fe-2S]-[ferredoxin] + 2 S-adenosyl-L-methionine = (sulfur carrier)-H + biotin + 2 5'-deoxyadenosine + 2 L-methionine + 2 oxidized [2Fe-2S]-[ferredoxin]. The protein operates within cofactor biosynthesis; biotin biosynthesis; biotin from 7,8-diaminononanoate: step 2/2. Its function is as follows. Catalyzes the conversion of dethiobiotin (DTB) to biotin by the insertion of a sulfur atom into dethiobiotin via a radical-based mechanism. The protein is Biotin synthase of Lawsonia intracellularis (strain PHE/MN1-00).